Here is a 477-residue protein sequence, read N- to C-terminus: Sporulation-specific protein 77 (477 aa).

Residues 428–452 form a disordered region; the sequence is SQQRESSNAESESITSSTEEDEEGL. The segment covering 432–444 has biased composition (low complexity); it reads ESSNAESESITSS.

It localises to the cytoplasm. Functionally, required for spore wall assembly and ascus formation. In Saccharomyces cerevisiae (strain ATCC 204508 / S288c) (Baker's yeast), this protein is Sporulation-specific protein 77 (SPO77).